We begin with the raw amino-acid sequence, 479 residues long: Deoxyribodipyrimidine photo-lyase (479 aa).

The Photolyase/cryptochrome alpha/beta domain occupies S6–L137. FAD is bound at residue Y229. R233 contacts DNA. FAD is bound by residues T241–S245 and E278–Y285. Interaction with DNA regions lie at residues E278–Y285 and N344–R345. D375 to D377 contacts FAD. Q407 contributes to the DNA binding site.

The protein belongs to the DNA photolyase class-1 family. As to quaternary structure, monomer. It depends on FAD as a cofactor. Requires (6R)-5,10-methylene-5,6,7,8-tetrahydrofolate as cofactor.

The enzyme catalyses cyclobutadipyrimidine (in DNA) = 2 pyrimidine residues (in DNA).. Involved in repair of UV radiation-induced DNA damage. Catalyzes the light-dependent monomerization (300-600 nm) of cyclobutyl pyrimidine dimers (in cis-syn configuration), which are formed between adjacent bases on the same DNA strand upon exposure to ultraviolet radiation. This chain is Deoxyribodipyrimidine photo-lyase (phr), found in Alkalihalophilus pseudofirmus (strain ATCC BAA-2126 / JCM 17055 / OF4) (Bacillus pseudofirmus).